Here is a 222-residue protein sequence, read N- to C-terminus: Phosphoribosylformylglycinamidine synthase subunit PurQ (222 aa).

A Glutamine amidotransferase type-1 domain is found at 3–222 (AAVVVFPGSN…RALSGLLTDA (220 aa)). Cysteine 86 functions as the Nucleophile in the catalytic mechanism. Residues histidine 194 and glutamate 196 contribute to the active site.

Part of the FGAM synthase complex composed of 1 PurL, 1 PurQ and 2 PurS subunits.

The protein localises to the cytoplasm. The enzyme catalyses N(2)-formyl-N(1)-(5-phospho-beta-D-ribosyl)glycinamide + L-glutamine + ATP + H2O = 2-formamido-N(1)-(5-O-phospho-beta-D-ribosyl)acetamidine + L-glutamate + ADP + phosphate + H(+). It catalyses the reaction L-glutamine + H2O = L-glutamate + NH4(+). It participates in purine metabolism; IMP biosynthesis via de novo pathway; 5-amino-1-(5-phospho-D-ribosyl)imidazole from N(2)-formyl-N(1)-(5-phospho-D-ribosyl)glycinamide: step 1/2. Part of the phosphoribosylformylglycinamidine synthase complex involved in the purines biosynthetic pathway. Catalyzes the ATP-dependent conversion of formylglycinamide ribonucleotide (FGAR) and glutamine to yield formylglycinamidine ribonucleotide (FGAM) and glutamate. The FGAM synthase complex is composed of three subunits. PurQ produces an ammonia molecule by converting glutamine to glutamate. PurL transfers the ammonia molecule to FGAR to form FGAM in an ATP-dependent manner. PurS interacts with PurQ and PurL and is thought to assist in the transfer of the ammonia molecule from PurQ to PurL. This Ruegeria sp. (strain TM1040) (Silicibacter sp.) protein is Phosphoribosylformylglycinamidine synthase subunit PurQ.